Here is a 206-residue protein sequence, read N- to C-terminus: Small ribosomal subunit protein uS4 (206 aa).

Residues 96-158 (SRLDNVVYRM…AKKQLRIQNA (63 aa)) form the S4 RNA-binding domain.

Belongs to the universal ribosomal protein uS4 family. In terms of assembly, part of the 30S ribosomal subunit. Contacts protein S5. The interaction surface between S4 and S5 is involved in control of translational fidelity.

Its function is as follows. One of the primary rRNA binding proteins, it binds directly to 16S rRNA where it nucleates assembly of the body of the 30S subunit. Functionally, with S5 and S12 plays an important role in translational accuracy. This chain is Small ribosomal subunit protein uS4, found in Francisella tularensis subsp. tularensis (strain FSC 198).